The primary structure comprises 195 residues: Protein lin-28 homolog A (195 aa).

In terms of domain architecture, CSD spans Gln-33–Pro-106. Positions Leu-98–Arg-127 are disordered. A flexible linker region spans residues Gly-107–Gly-130. Residues Pro-118–Arg-127 show a composition bias toward basic residues. 2 CCHC-type zinc fingers span residues Asp-131–Leu-148 and Lys-153–Glu-170. Positions 133, 136, 141, 146, 155, 158, 163, and 168 each coordinate Zn(2+).

The protein belongs to the lin-28 family. Monomer.

The protein localises to the cytoplasm. The protein resides in the rough endoplasmic reticulum. Its subcellular location is the P-body. It is found in the stress granule. It localises to the nucleus. The protein localises to the nucleolus. In terms of biological role, RNA-binding protein that inhibits processing of pre-let-7 miRNAs and regulates translation of mRNAs that control developmental timing, pluripotency and metabolism. Seems to recognize a common structural G-quartet (G4) feature in its miRNA and mRNA targets. 'Translational enhancer' that drives specific mRNAs to polysomes and increases the efficiency of protein synthesis. Its association with the translational machinery and target mRNAs results in an increased number of initiation events per molecule of mRNA and, indirectly, in mRNA stabilization. Suppressor of microRNA (miRNA) biogenesis, including that of let-7. Binds specific target miRNA precursors (pre-miRNAs), recognizing an 5'-GGAG-3' motif found in their terminal loop, and recruits uridylyltransferase. This results in the terminal uridylation of target pre-miRNAs. Uridylated pre-miRNAs fail to be processed by Dicer and undergo degradation. Localized to the periendoplasmic reticulum area, binds to a large number of spliced mRNAs and inhibits the translation of mRNAs destined for the ER, reducing the synthesis of transmembrane proteins, ER or Golgi lumen proteins, and secretory proteins. Binds to and enhances the translation of mRNAs for several metabolic enzymes, increasing glycolysis and oxidative phosphorylation. Which, with the let-7 repression may enhance tissue repair in adult tissue. This is Protein lin-28 homolog A (lin28a) from Xenopus laevis (African clawed frog).